The following is a 532-amino-acid chain: Cyclin-L1 (532 aa).

2 cyclin-like regions span residues 94 to 196 and 209 to 293; these read ELIQ…RVLK and KIIV…ETLR. Phosphothreonine is present on threonine 331. The tract at residues 332–532 is disordered; sequence PALSTLGGFS…SRSGHGRHRR (201 aa). 2 positions are modified to phosphoserine: serine 341 and serine 344. Glycyl lysine isopeptide (Lys-Gly) (interchain with G-Cter in SUMO2) cross-links involve residues lysine 345 and lysine 353. The span at 348–358 shows a compositional bias: basic and acidic residues; that stretch reads SPREVKAEEKS. 2 positions are modified to phosphoserine: serine 358 and serine 361. The segment covering 367–376 has biased composition (basic and acidic residues); sequence VKKEPEDRQQ. Lysine 368 is covalently cross-linked (Glycyl lysine isopeptide (Lys-Gly) (interchain with G-Cter in SUMO2)). Serine 380 bears the Phosphoserine mark. Basic residues-rich tracts occupy residues 388–424, 444–458, 466–482, and 492–504; these read DSKRSRTSRSASRSRSRTRSRSRSHSPRRHYNNRRSR, RRHHNHGSPHLKAKH, SNRHGHKRKKSRSRSQS, and KKHRHERGHHRDR. An RS region spans residues 396–438; the sequence is RSASRSRSRTRSRSRSHSPRRHYNNRRSRSGTYSSRSRSRSRS. The residue at position 451 (serine 451) is a Phosphoserine. Positions 505–514 are enriched in basic and acidic residues; that stretch reads RERSRSFERS. A compositionally biased stretch (basic residues) spans 515–532; that stretch reads HKGKHHGGSRSGHGRHRR.

It belongs to the cyclin family. Cyclin L subfamily. In terms of assembly, interacts with POLR2A via its hyperphosphorylated C-terminal domain (CTD). Interacts with CDK11A, CDK11B, CDK12 and CDK13. May form a ternary complex with CDK11B and casein kinase II (CKII). Interacts with pre-mRNA-splicing factors, including at least SRSF1, SRSF2 and SRSF7/SLU7. As to expression, widely expressed (at protein level).

The protein localises to the nucleus speckle. It is found in the nucleus. The protein resides in the nucleoplasm. It localises to the cytoplasm. Its function is as follows. Involved in pre-mRNA splicing. Functions in association with cyclin-dependent kinases (CDKs). May play a role in the regulation of RNA polymerase II (pol II). Inhibited by the CDK-specific inhibitor CDKN1A/p21. The sequence is that of Cyclin-L1 (Ccnl1) from Mus musculus (Mouse).